The chain runs to 207 residues: dTTP/UTP pyrophosphatase (207 aa).

Residue D87 is the Proton acceptor of the active site.

It belongs to the Maf family. YhdE subfamily. The cofactor is a divalent metal cation.

The protein resides in the cytoplasm. The catalysed reaction is dTTP + H2O = dTMP + diphosphate + H(+). It catalyses the reaction UTP + H2O = UMP + diphosphate + H(+). Functionally, nucleoside triphosphate pyrophosphatase that hydrolyzes dTTP and UTP. May have a dual role in cell division arrest and in preventing the incorporation of modified nucleotides into cellular nucleic acids. The chain is dTTP/UTP pyrophosphatase from Bordetella bronchiseptica (strain ATCC BAA-588 / NCTC 13252 / RB50) (Alcaligenes bronchisepticus).